Here is a 629-residue protein sequence, read N- to C-terminus: tRNA uridine 5-carboxymethylaminomethyl modification enzyme MnmG (629 aa).

13–18 (GGGHAG) contacts FAD. 273–287 (GPRYCPSIEDKITRF) serves as a coordination point for NAD(+).

The protein belongs to the MnmG family. In terms of assembly, homodimer. Heterotetramer of two MnmE and two MnmG subunits. FAD serves as cofactor.

The protein localises to the cytoplasm. NAD-binding protein involved in the addition of a carboxymethylaminomethyl (cmnm) group at the wobble position (U34) of certain tRNAs, forming tRNA-cmnm(5)s(2)U34. This chain is tRNA uridine 5-carboxymethylaminomethyl modification enzyme MnmG, found in Aeromonas salmonicida (strain A449).